We begin with the raw amino-acid sequence, 217 residues long: Somatotropin (217 aa).

Residues 1–26 (MAAGSRTSLLLAFALLCLPWLQEGSA) form the signal peptide. Residue H44 coordinates Zn(2+). C79 and C191 are joined by a disulfide. Position 132 is a phosphoserine (S132). E200 serves as a coordination point for Zn(2+). A disulfide bond links C208 and C215.

This sequence belongs to the somatotropin/prolactin family.

Its subcellular location is the secreted. Its function is as follows. Plays an important role in growth control. Its major role in stimulating body growth is to stimulate the liver and other tissues to secrete IGF1. It stimulates both the differentiation and proliferation of myoblasts. It also stimulates amino acid uptake and protein synthesis in muscle and other tissues. This Macaca mulatta (Rhesus macaque) protein is Somatotropin (GH1).